A 700-amino-acid chain; its full sequence is Myb-related protein B (700 aa).

HTH myb-type domains lie at Arg26 to Leu77, Asn78 to Val133, and Lys134 to Val184. Residues Trp54–Leu77 constitute a DNA-binding region (H-T-H motif). Lys104 participates in a covalent cross-link: Glycyl lysine isopeptide (Lys-Gly) (interchain with G-Cter in SUMO2). DNA-binding regions (H-T-H motif) lie at residues Trp106–Leu129 and Trp157–Ile180. Glycyl lysine isopeptide (Lys-Gly) (interchain with G-Cter in SUMO2) cross-links involve residues Lys194 and Lys197. Disordered regions lie at residues Leu212 to Ser287 and Pro391 to Arg412. Positions Gln213–Pro229 are enriched in polar residues. Position 241 is a phosphoserine (Ser241). Thr266 carries the post-translational modification Phosphothreonine. Lys275 participates in a covalent cross-link: Glycyl lysine isopeptide (Lys-Gly) (interchain with G-Cter in SUMO2). Phosphoserine is present on residues Ser282 and Ser393. A Glycyl lysine isopeptide (Lys-Gly) (interchain with G-Cter in SUMO2) cross-link involves residue Lys411. A Nuclear localization signal motif is present at residues Lys411–Arg417. A phosphothreonine; by CDK2 mark is found at Thr440 and Thr444. Glycyl lysine isopeptide (Lys-Gly) (interchain with G-Cter in SUMO2) cross-links involve residues Lys447 and Lys482. 2 positions are modified to phosphothreonine; by CDK2: Thr487 and Thr494. Lys499 is covalently cross-linked (Glycyl lysine isopeptide (Lys-Gly) (interchain with G-Cter in SUMO2)). Residue Thr505 is modified to Phosphothreonine. Lys509 participates in a covalent cross-link: Glycyl lysine isopeptide (Lys-Gly) (interchain with G-Cter in SUMO2). Thr520 is subject to Phosphothreonine; by CDK2. Glycyl lysine isopeptide (Lys-Gly) (interchain with G-Cter in SUMO2) cross-links involve residues Lys523, Lys533, and Lys546. The Bipartite nuclear localization signal motif lies at Arg564–Lys584. Ser577 is modified (phosphoserine; by CDK2). Residues Lys584, Lys596, Lys625, Lys639, and Lys648 each participate in a glycyl lysine isopeptide (Lys-Gly) (interchain with G-Cter in SUMO2) cross-link.

Component of the DREAM complex (also named LINC complex) at least composed of E2F4, E2F5, LIN9, LIN37, LIN52, LIN54, MYBL1, MYBL2, RBL1, RBL2, RBBP4, TFDP1 and TFDP2. The complex exists in quiescent cells where it represses cell cycle-dependent genes. It dissociates in S phase when LIN9, LIN37, LIN52 and LIN54 form a subcomplex that binds to MYBL22. Interacts with CCNF (via the Cyclin N-terminal domain). In terms of processing, phosphorylated by cyclin A/CDK2 during S-phase. Phosphorylation at Thr-520 is probably involved in transcriptional activity.

It localises to the nucleus. Transcription factor involved in the regulation of cell survival, proliferation, and differentiation. Transactivates the expression of the CLU gene. The sequence is that of Myb-related protein B (MYBL2) from Homo sapiens (Human).